Reading from the N-terminus, the 576-residue chain is Gamma-aminobutyric acid receptor subunit beta (576 aa).

The signal sequence occupies residues 1–29; the sequence is MSDSMLYQTLQTCLPKSRLITLWLAFTLA. The Extracellular segment spans residues 30–268; sequence MLIQEPRRHA…IQFVRSMGYY (239 aa). N-linked (GlcNAc...) asparagine glycosylation occurs at Asn-56. The cysteines at positions 183 and 197 are disulfide-linked. Residue Asn-251 is glycosylated (N-linked (GlcNAc...) asparagine). A run of 3 helical transmembrane segments spans residues 269–289, 298–320, and 330–350; these read LIQI…SFWL, VALG…AALP, and VYLG…ATVG. Topologically, residues 351-540 are cytoplasmic; the sequence is YMAKRIQMRK…TPSDIDKYSR (190 aa). Disordered stretches follow at residues 372–418 and 452–507; these read QKKQ…QTVS and HDPK…GDAE. Basic residues predominate over residues 398-412; sequence HGHGHGHHSHGHPHV. The span at 475-490 shows a compositional bias: pro residues; sequence PVGPHGPGPQGPPGGP. Residues 491 to 501 are compositionally biased toward gly residues; that stretch reads PAGGGGGGAPP. Residues 541–561 traverse the membrane as a helical segment; sequence IVFPVCFVCFNLMYWIIYLHV.

Belongs to the ligand-gated ion channel (TC 1.A.9) family. Gamma-aminobutyric acid receptor (TC 1.A.9.5) subfamily. Homomultimer.

It localises to the postsynaptic cell membrane. It is found in the cell membrane. GABA, an inhibitory neurotransmitter, mediates neuronal inhibition by binding to the GABA receptor and opening an integral chloride channel. This Musca domestica (House fly) protein is Gamma-aminobutyric acid receptor subunit beta.